A 318-amino-acid chain; its full sequence is Olfactory receptor 13C2 (318 aa).

At 1-25 the chain is on the extracellular side; sequence MEWENHTILVEFFLKGLSGHPRLEL. N-linked (GlcNAc...) asparagine glycosylation occurs at Asn-5. The helical transmembrane segment at 26–46 threads the bilayer; that stretch reads LFFVLIFIMYVVILLGNGTLI. Residues 47–54 lie on the Cytoplasmic side of the membrane; that stretch reads LISILDPH. Residues 55 to 75 form a helical membrane-spanning segment; the sequence is LHTPMYFFLGNLSFLDICYTT. Topologically, residues 76–99 are extracellular; sequence TSIPSTLVSFLSERKTISLSGCAV. Cys-97 and Cys-189 are oxidised to a cystine. A helical transmembrane segment spans residues 100–120; it reads QMFLGLAMGTTECVLLGMMAF. Residues 121–139 are Cytoplasmic-facing; that stretch reads DRYVAICNPLRYPIIMSKD. The helical transmembrane segment at 140-160 threads the bilayer; sequence AYVPMAAGSWIIGAVNSAVQS. At 161–197 the chain is on the extracellular side; the sequence is VFVVQLPFCRNNIINHFTCEILAVMKLACADISDNEF. A helical transmembrane segment spans residues 198 to 217; that stretch reads IMLVATTLFILTPLLLIIVS. Over 218–237 the chain is Cytoplasmic; the sequence is YTLIIVSIFKISSSEGRSKA. Residues 238–258 traverse the membrane as a helical segment; that stretch reads SSTCSAHLTVVIIFYGTILFM. The Extracellular segment spans residues 259–277; the sequence is YMKPKSKETLNSDDLDATD. A helical transmembrane segment spans residues 278–298; it reads KIISMFYGVMTPMMNPLIYSL. At 299-318 the chain is on the cytoplasmic side; that stretch reads RNKDVKEAVKHLLNRRFFSK.

The protein belongs to the G-protein coupled receptor 1 family.

Its subcellular location is the cell membrane. Functionally, odorant receptor. The protein is Olfactory receptor 13C2 (OR13C2) of Homo sapiens (Human).